A 512-amino-acid polypeptide reads, in one-letter code: Alpha-amylase 1 (512 aa).

The N-terminal stretch at 1-25 is a signal peptide; the sequence is MRFSTEGFTSKVVAAILAFSRLVSA. C66 and C74 are disulfide-bonded. W119 serves as a coordination point for substrate. N157 is a Ca(2+) binding site. H158 provides a ligand contact to substrate. An intrachain disulfide couples C186 to C200. The Ca(2+) site is built by E198 and D211. A glycan (N-linked (GlcNAc...) asparagine) is linked at N233. R240 serves as a coordination point for substrate. D242, H246, and E266 together coordinate Ca(2+). D242 acts as the Nucleophile in catalysis. 245–246 serves as a coordination point for substrate; that stretch reads KH. The active-site Proton donor is E266. G270 is a substrate binding site. A disulfide bridge links C276 with C319. 2 residues coordinate substrate: D333 and R380. A disulfide bridge links C475 with C510.

This sequence belongs to the glycosyl hydrolase 13 family. Ca(2+) serves as cofactor.

Its subcellular location is the secreted. The enzyme catalyses Endohydrolysis of (1-&gt;4)-alpha-D-glucosidic linkages in polysaccharides containing three or more (1-&gt;4)-alpha-linked D-glucose units.. Its activity is regulated as follows. Alpha-amylase expression underlies catabolite repression by glucose. The polypeptide is Alpha-amylase 1 (AMY1) (Schwanniomyces occidentalis (Yeast)).